Here is a 94-residue protein sequence, read N- to C-terminus: UPF0358 protein Bcer98_2651 (94 aa).

The protein belongs to the UPF0358 family.

This chain is UPF0358 protein Bcer98_2651, found in Bacillus cytotoxicus (strain DSM 22905 / CIP 110041 / 391-98 / NVH 391-98).